Consider the following 235-residue polypeptide: Orotidine 5'-phosphate decarboxylase (235 aa).

Substrate contacts are provided by residues Asp-17, Lys-39, 66–75 (DLKLHDIGNT), Thr-121, Arg-182, Gln-191, Gly-211, and Arg-212. Lys-68 serves as the catalytic Proton donor.

It belongs to the OMP decarboxylase family. Type 1 subfamily. Homodimer.

The catalysed reaction is orotidine 5'-phosphate + H(+) = UMP + CO2. The protein operates within pyrimidine metabolism; UMP biosynthesis via de novo pathway; UMP from orotate: step 2/2. In terms of biological role, catalyzes the decarboxylation of orotidine 5'-monophosphate (OMP) to uridine 5'-monophosphate (UMP). The protein is Orotidine 5'-phosphate decarboxylase of Rhodopseudomonas palustris (strain BisB5).